The primary structure comprises 639 residues: Exocyst complex component EXO70E2 (639 aa).

Belongs to the EXO70 family. Component of the exocyst complex and of the exocyst-positive organelle (EXPO). Interacts with SEC6, SEC10A and SEC10B. Expressed in roots, in the root-hair zone, both in root hair and nonhair cells.

Its subcellular location is the secreted. The protein resides in the extracellular exosome. It is found in the cell membrane. The protein localises to the cytoplasm. It localises to the endomembrane system. Influences the subcellular localization patterns of other exocyst complex proteins (e.g. SEC5A, SEC15A, SEC15B and EXO84B) leading to their recruitment to exocyst, well-defined large punctate structures throughout the cytosol. Essential component for the formation and the recruitment of exocyst subunits to the exocyst-positive organelle (EXPO), a secreted double membrane structure also called extracellular exosome, that acts as a sequester for cytosolic proteins to release them into the apoplast. In Arabidopsis thaliana (Mouse-ear cress), this protein is Exocyst complex component EXO70E2.